Here is a 171-residue protein sequence, read N- to C-terminus: Translation initiation factor IF-3 (171 aa).

The protein belongs to the IF-3 family. As to quaternary structure, monomer.

It is found in the cytoplasm. In terms of biological role, IF-3 binds to the 30S ribosomal subunit and shifts the equilibrium between 70S ribosomes and their 50S and 30S subunits in favor of the free subunits, thus enhancing the availability of 30S subunits on which protein synthesis initiation begins. This chain is Translation initiation factor IF-3, found in Thermus thermophilus (strain ATCC BAA-163 / DSM 7039 / HB27).